The chain runs to 321 residues: tRNA(Ile)-lysidine synthase (321 aa).

Residue S30–S35 participates in ATP binding.

The protein belongs to the tRNA(Ile)-lysidine synthase family.

It is found in the cytoplasm. The enzyme catalyses cytidine(34) in tRNA(Ile2) + L-lysine + ATP = lysidine(34) in tRNA(Ile2) + AMP + diphosphate + H(+). Its function is as follows. Ligates lysine onto the cytidine present at position 34 of the AUA codon-specific tRNA(Ile) that contains the anticodon CAU, in an ATP-dependent manner. Cytidine is converted to lysidine, thus changing the amino acid specificity of the tRNA from methionine to isoleucine. The chain is tRNA(Ile)-lysidine synthase from Chlamydia muridarum (strain MoPn / Nigg).